The primary structure comprises 58 residues: Alpha-conotoxin AuIB (58 aa).

A signal peptide spans 1–16 (MFTVFLLVVLATTVVS). Positions 17–39 (FTSDRASDGRKDAASGLIALTMK) are excised as a propeptide. Intrachain disulfides connect Cys41/Cys47 and Cys42/Cys54. A Cysteine amide modification is found at Cys54.

As to expression, expressed by the venom duct.

It localises to the secreted. Alpha-conotoxins act on postsynaptic membranes, they bind to the nicotinic acetylcholine receptors (nAChR) and thus inhibit them. This toxin blocks mammalian nAChR alpha-3-beta-4/CHRNA3-CHRNB4 subunits. Also exhibits inhibition of D.melanogaster alpha-7/CHRNA7 nAChRs. The chain is Alpha-conotoxin AuIB from Conus aulicus (Princely cone).